Consider the following 748-residue polypeptide: Peptidyl serine alpha-galactosyltransferase (748 aa).

The signal sequence occupies residues 1-26 (MVAVFHGPLVLGALLLLLALQHGASA). The Extracellular portion of the chain corresponds to 27–710 (EEPGFANRTG…GPSLHSLLGR (684 aa)). Asparagine 33, asparagine 184, and asparagine 297 each carry an N-linked (GlcNAc...) asparagine glycan. Residues 415–449 (CQDFHPKCEEWKESGECTKNENYMTENCRKTCDKC) enclose the ShKT domain. Intrachain disulfides connect cysteine 415-cysteine 449, cysteine 422-cysteine 442, and cysteine 431-cysteine 446. 2 disordered regions span residues 474-576 (ELQP…ADPK) and 611-670 (EVPK…KKNI). The segment covering 531–565 (SPPPSPPPASPPPVDSPPPMSPPPESPSPDKPPPK) has biased composition (pro residues). Over residues 611 to 637 (EVPKRTKATDEEEEAPKAKHAESHLTL) the composition is skewed to basic and acidic residues. The helical transmembrane segment at 711–731 (LNTWQALVLWLVVVVAFLALV) threads the bilayer. The Cytoplasmic portion of the chain corresponds to 732–748 (PRIAKLRRRQRSGMRTE).

It depends on Mn(2+) as a cofactor.

The protein localises to the membrane. In terms of biological role, glycosyltransferase involved in the O-galactosylation of several proteins including extensins. Catalyzes the transfer of alpha-galactosyl to Ser residues. Hydroxylation of proline residues adjacent to the serine acceptor is required for activity. Utilizes selectively UDP-galactose as a donor nucleotide sugar. The protein is Peptidyl serine alpha-galactosyltransferase of Chlamydomonas reinhardtii (Chlamydomonas smithii).